The chain runs to 242 residues: 6-carboxyhexanoate--CoA ligase (242 aa).

This sequence belongs to the BioW family. In terms of assembly, homodimer. Mg(2+) serves as cofactor.

It carries out the reaction heptanedioate + ATP + CoA = 6-carboxyhexanoyl-CoA + AMP + diphosphate. It functions in the pathway metabolic intermediate metabolism; pimeloyl-CoA biosynthesis; pimeloyl-CoA from pimelate: step 1/1. In terms of biological role, catalyzes the transformation of pimelate into pimeloyl-CoA with concomitant hydrolysis of ATP to AMP. This chain is 6-carboxyhexanoate--CoA ligase, found in Veillonella parvula (strain ATCC 10790 / DSM 2008 / CCUG 5123 / JCM 12972 / NCTC 11810 / Te3) (Veillonella alcalescens).